Here is a 271-residue protein sequence, read N- to C-terminus: Cyanophycinase (271 aa).

Active-site charge relay system residues include serine 132, histidine 174, and glutamate 201.

It belongs to the peptidase S51 family. As to quaternary structure, homodimer.

The enzyme catalyses [L-4-(L-arginin-2-N-yl)aspartate](n) + H2O = [L-4-(L-arginin-2-N-yl)aspartate](n-1) + L-4-(L-arginin-2-N-yl)aspartate. Its function is as follows. Exopeptidase that catalyzes the hydrolytic cleavage of multi-L-arginyl-poly-L-aspartic acid (cyanophycin; a water-insoluble reserve polymer) into aspartate-arginine dipeptides. The protein is Cyanophycinase (cphB) of Synechocystis sp. (strain ATCC 27184 / PCC 6803 / Kazusa).